A 198-amino-acid polypeptide reads, in one-letter code: Potassium-transporting ATPase KdpC subunit (198 aa).

The helical transmembrane segment at 8–28 (ILAVLVFTILCGIIYPVSTTV) threads the bilayer.

It belongs to the KdpC family. The system is composed of three essential subunits: KdpA, KdpB and KdpC.

It localises to the cell membrane. Functionally, part of the high-affinity ATP-driven potassium transport (or Kdp) system, which catalyzes the hydrolysis of ATP coupled with the electrogenic transport of potassium into the cytoplasm. This subunit acts as a catalytic chaperone that increases the ATP-binding affinity of the ATP-hydrolyzing subunit KdpB by the formation of a transient KdpB/KdpC/ATP ternary complex. The polypeptide is Potassium-transporting ATPase KdpC subunit (Clostridium perfringens (strain ATCC 13124 / DSM 756 / JCM 1290 / NCIMB 6125 / NCTC 8237 / Type A)).